We begin with the raw amino-acid sequence, 645 residues long: Bifurcating [FeFe] hydrogenase alpha subunit (645 aa).

A 2Fe-2S ferredoxin-type domain is found at 1–76 (MKIYVDGREV…GMKVKTNTPE (76 aa)). 4 residues coordinate [2Fe-2S] cluster: Cys34, Cys45, Cys48, and Cys60. Residues 76-115 (EIYEMRRNILELILATHNRDCTTCDRNGSCKLQKYAEDFG) form the 4Fe-4S His(Cys)3-ligated-type domain. The [4Fe-4S] cluster site is built by His92, Cys96, Cys99, Cys105, Cys143, Cys146, Cys149, Cys153, Cys186, Cys189, Cys192, Cys196, Cys295, Cys350, Cys482, and Cys486. 4Fe-4S ferredoxin-type domains follow at residues 133-164 (SAPVVRDTSKCILCGDCVRVCEEIQGVGVIEF) and 178-206 (DTPLIETECVLCGQCVAYCPTGALSIRND). Cys486 serves as a coordination point for Fe(2+). 4 residues coordinate [2Fe-2S] cluster: Cys575, Cys580, Cys612, and Cys616.

In terms of assembly, heterotrimer composed of HydA (alpha subunit), HydB (beta subunit) and HydC (gamma subunit). Near neutral and acidic pH conditions favor oligomerization of the heterotrimeric holoenzyme. It depends on [2Fe-2S] cluster as a cofactor. [4Fe-4S] cluster serves as cofactor. Requires Fe(2+) as cofactor.

Its subcellular location is the cytoplasm. It catalyses the reaction 2 H2 + 2 oxidized [2Fe-2S]-[ferredoxin] + NAD(+) = 2 reduced [2Fe-2S]-[ferredoxin] + NADH + 3 H(+). In terms of biological role, catalyzes the oxidation of the physiological electron carriers NADH and reduced ferredoxin, coupled to the production of H(2). Acts as a bifurcating [FeFe] hydrogenase, which uses the exergonic oxidation of reduced ferredoxin to drive the unfavorable oxidation of NADH to produce H(2). The alpha subunit contains the catalytic H-cluster. This Thermotoga maritima (strain ATCC 43589 / DSM 3109 / JCM 10099 / NBRC 100826 / MSB8) protein is Bifurcating [FeFe] hydrogenase alpha subunit.